The chain runs to 957 residues: Collagen alpha-1(XXI) chain (957 aa).

A signal peptide spans 1–16 (MPGIIYILCSILLIES). The region spanning 37–211 (DLVFILDGSW…RIREIMKQKL (175 aa)) is the VWFA domain. The region spanning 230–412 (GFDILLGLGI…LQKLRIYCDP (183 aa)) is the Laminin G-like domain. Disordered regions lie at residues 441–788 (PAPC…GKEQ) and 820–935 (CKTQ…DAGI). Collagen-like domains lie at 448 to 501 (PGEK…PRGF), 502 to 543 (AGLK…DKGD), 544 to 591 (IGID…EEGK), 592 to 642 (PGPP…ISGP), 643 to 684 (EGIS…IPGQ), 685 to 741 (QGYT…EIGE), 742 to 786 (HGHR…QQGK), and 825 to 882 (GSPG…GNKG). The span at 483-498 (TSGSPGIPGSPGVQGP) shows a compositional bias: low complexity. Residues 535–556 (MGPKGDKGDIGIDGKKGTKGDK) show a composition bias toward basic and acidic residues. 2 stretches are compositionally biased toward low complexity: residues 597–616 (MEGL…DGAN) and 633–649 (PTGT…SGPQ). A compositionally biased stretch (basic and acidic residues) spans 733 to 744 (KGEKGEIGEHGH). Low complexity predominate over residues 775–786 (QGLPGPKGQQGK).

It belongs to the fibril-associated collagens with interrupted helices (FACIT) family.

Its subcellular location is the secreted. It is found in the extracellular space. The protein resides in the extracellular matrix. The protein localises to the cytoplasm. This Xenopus laevis (African clawed frog) protein is Collagen alpha-1(XXI) chain (col21a1).